The following is a 231-amino-acid chain: MAKLTKRMRAIREKIEAGKLYPANEAFALLKEISSVKFAESVDVSVNLGVDPRKSDQVVRGSTVLPNGTGKTVRVAVFTQGANAEAAKAAGADIVGMDDLAAEVKKGNMDFDVVIATPDAMRVVGQLGQILGPRGLMPNPKVGTVTTDVATAVKNAKGGQVRYRTDKAGIIHCSIGKVGFEPDALKENLNALLADLQKAKPSAAKGVYMKKVTVSTTMGPGIAVDQASLSA.

This sequence belongs to the universal ribosomal protein uL1 family. As to quaternary structure, part of the 50S ribosomal subunit.

In terms of biological role, binds directly to 23S rRNA. The L1 stalk is quite mobile in the ribosome, and is involved in E site tRNA release. Its function is as follows. Protein L1 is also a translational repressor protein, it controls the translation of the L11 operon by binding to its mRNA. The chain is Large ribosomal subunit protein uL1 from Thioalkalivibrio sulfidiphilus (strain HL-EbGR7).